Reading from the N-terminus, the 94-residue chain is Small ribosomal subunit protein bS18 (94 aa).

The span at 1 to 12 (MSEQNSRPQNSE) shows a compositional bias: low complexity. The tract at residues 1 to 29 (MSEQNSRPQNSERPQRSRRPQGGPRRRRK) is disordered. Basic residues predominate over residues 16 to 29 (RSRRPQGGPRRRRK).

Belongs to the bacterial ribosomal protein bS18 family. In terms of assembly, part of the 30S ribosomal subunit. Forms a tight heterodimer with protein bS6.

In terms of biological role, binds as a heterodimer with protein bS6 to the central domain of the 16S rRNA, where it helps stabilize the platform of the 30S subunit. The protein is Small ribosomal subunit protein bS18 of Leuconostoc citreum (strain KM20).